Reading from the N-terminus, the 34-residue chain is Photosystem II reaction center protein M (34 aa).

Residues 5–25 traverse the membrane as a helical segment; the sequence is ILAFIATALFILIPTAFLLIL.

The protein belongs to the PsbM family. In terms of assembly, PSII is composed of 1 copy each of membrane proteins PsbA, PsbB, PsbC, PsbD, PsbE, PsbF, PsbH, PsbI, PsbJ, PsbK, PsbL, PsbM, PsbT, PsbX, PsbY, PsbZ, Psb30/Ycf12, at least 3 peripheral proteins of the oxygen-evolving complex and a large number of cofactors. It forms dimeric complexes.

The protein localises to the plastid. It is found in the chloroplast thylakoid membrane. One of the components of the core complex of photosystem II (PSII). PSII is a light-driven water:plastoquinone oxidoreductase that uses light energy to abstract electrons from H(2)O, generating O(2) and a proton gradient subsequently used for ATP formation. It consists of a core antenna complex that captures photons, and an electron transfer chain that converts photonic excitation into a charge separation. This subunit is found at the monomer-monomer interface. This is Photosystem II reaction center protein M from Anthoceros angustus (Hornwort).